A 702-amino-acid polypeptide reads, in one-letter code: Polyphosphate kinase (702 aa).

Asn-55 is an ATP binding site. Mg(2+)-binding residues include Arg-389 and Arg-419. His-449 (phosphohistidine intermediate) is an active-site residue. ATP is bound by residues Tyr-482, Arg-578, and His-606.

Belongs to the polyphosphate kinase 1 (PPK1) family. Mg(2+) serves as cofactor. An intermediate of this reaction is the autophosphorylated ppk in which a phosphate is covalently linked to a histidine residue through a N-P bond.

It carries out the reaction [phosphate](n) + ATP = [phosphate](n+1) + ADP. Its function is as follows. Catalyzes the reversible transfer of the terminal phosphate of ATP to form a long-chain polyphosphate (polyP). The chain is Polyphosphate kinase from Bacillus anthracis.